The following is a 113-amino-acid chain: Hydrogenase maturation factor HypA (113 aa).

A Ni(2+)-binding site is contributed by histidine 2. Residues cysteine 73, cysteine 76, cysteine 89, and cysteine 92 each contribute to the Zn(2+) site.

Belongs to the HypA/HybF family.

Functionally, involved in the maturation of [NiFe] hydrogenases. Required for nickel insertion into the metal center of the hydrogenase. The sequence is that of Hydrogenase maturation factor HypA from Methylocella silvestris (strain DSM 15510 / CIP 108128 / LMG 27833 / NCIMB 13906 / BL2).